We begin with the raw amino-acid sequence, 858 residues long: Tetratricopeptide repeat protein 7A (858 aa).

Serine 51 carries the phosphoserine modification. 6 TPR repeats span residues 121–157, 177–210, 414–447, 497–531, 533–565, and 566–599; these read CEAM…MENK, ERLP…AQVF, FHLW…RPSD, YSLQ…APSD, QVIL…RKDD, and AHAL…HPEN. Serine 182 is subject to Phosphoserine. Residues serine 647, serine 678, serine 679, and serine 690 each carry the phosphoserine modification. Position 693 is a phosphothreonine (threonine 693). TPR repeat units follow at residues 745-778, 780-812, and 813-846; these read HSVL…NPDG, RIMH…QSTC, and HEAW…EASS.

In terms of assembly, component of a phosphatidylinositol 4-kinase (PI4K) complex, composed of PI4KA, EFR3 (EFR3A or EFR3B), TTC7 (TTC7A or TTC7B) and HYCC (HYCC1 or HYCC2). Interacts with PI4KA. Interaction with PI4KA is direct. Interacts with EFR3 (EFR3A or EFR3B), interaction is direct. Interacts with HYCC (HYCC1 or HYCC2), interaction is direct. Association with the PI4K complex is strongly reduced by TMEM150A. As to expression, expressed in epithelial cells of the intestine, thymus, and pancreas (at protein level).

It localises to the cytoplasm. It is found in the cell membrane. Its function is as follows. Component of a complex required to localize phosphatidylinositol 4-kinase (PI4K) to the plasma membrane. The complex acts as a regulator of phosphatidylinositol 4-phosphate (PtdIns(4)P) synthesis. In the complex, plays a central role in bridging PI4KA to EFR3B and HYCC1, via direct interactions. The protein is Tetratricopeptide repeat protein 7A of Homo sapiens (Human).